We begin with the raw amino-acid sequence, 395 residues long: NKAP-like protein (395 aa).

2 disordered regions span residues 1 to 77 and 91 to 247; these read MSPV…RPLP and CGGY…ISCK. Ser23 and Ser25 each carry phosphoserine. The segment covering 25-35 has biased composition (polar residues); it reads SPPSALQTSRS. Basic and acidic residues predominate over residues 109–130; sequence DQEKEKEESYRQRRLKERERIG. Ser149 carries the phosphoserine modification. Basic and acidic residues predominate over residues 150–161; the sequence is DEHTPAEDEVKN. Composition is skewed to basic residues over residues 177–197 and 214–238; these read KTSH…KHKK and KKVK…KRTK.

Belongs to the NKAP family. Interacts with RBPJ, CIR1 and HDAC3. Specific to testis (at protein level). Detected in differenting spermatogonia and early spermatocytes (at protein level).

It localises to the nucleus. Transcriptional repressor of Notch-mediated signaling. Required for spermatogenesis. This Mus musculus (Mouse) protein is NKAP-like protein.